We begin with the raw amino-acid sequence, 626 residues long: (+)-3-carene synthase 1, chloroplastic (626 aa).

The N-terminal 45 residues, 1-45 (MSLISAVPLASSCVSKSLISSVREHKALRRAIATLQMSRPGKSVA), are a transit peptide targeting the chloroplast. Mg(2+) is bound by residues aspartate 377, aspartate 381, and aspartate 529. The short motif at 377–381 (DDMYD) is the DDXXD motif element.

This sequence belongs to the terpene synthase family. Tpsd subfamily. Mg(2+) is required as a cofactor. Mn(2+) serves as cofactor.

The protein resides in the plastid. The protein localises to the chloroplast. The enzyme catalyses (2E)-geranyl diphosphate = (+)-car-3-ene + diphosphate. The catalysed reaction is (2E)-geranyl diphosphate = terpinolene + diphosphate. The protein operates within terpene metabolism; oleoresin biosynthesis. It participates in secondary metabolite biosynthesis; terpenoid biosynthesis. Functionally, monoterpene synthase (TPS) involved in the biosynthesis of monoterpene natural products included in conifer oleoresin secretions and volatile emissions; these compounds contribute to biotic and abiotic stress defense against herbivores and pathogens. Catalyzes the conversion of (2E)-geranyl diphosphate (GPP) to (+)-3-carene and, to a lower extent, to terpinolene. This chain is (+)-3-carene synthase 1, chloroplastic, found in Pinus banksiana (Jack pine).